The sequence spans 231 residues: 7-cyano-7-deazaguanine synthase (231 aa).

Residue 11–21 (LSAGLDSTVNA) participates in ATP binding. 4 residues coordinate Zn(2+): Cys-197, Cys-205, Cys-208, and Cys-211.

This sequence belongs to the QueC family. The cofactor is Zn(2+).

The enzyme catalyses 7-carboxy-7-deazaguanine + NH4(+) + ATP = 7-cyano-7-deazaguanine + ADP + phosphate + H2O + H(+). Its pathway is purine metabolism; 7-cyano-7-deazaguanine biosynthesis. Functionally, catalyzes the ATP-dependent conversion of 7-carboxy-7-deazaguanine (CDG) to 7-cyano-7-deazaguanine (preQ(0)). The chain is 7-cyano-7-deazaguanine synthase from Bdellovibrio bacteriovorus (strain ATCC 15356 / DSM 50701 / NCIMB 9529 / HD100).